Here is a 411-residue protein sequence, read N- to C-terminus: Serine hydroxymethyltransferase (411 aa).

(6S)-5,6,7,8-tetrahydrofolate-binding positions include L113 and 117-119; that span reads GHL. N6-(pyridoxal phosphate)lysine is present on K222. 346-348 lines the (6S)-5,6,7,8-tetrahydrofolate pocket; the sequence is SPF.

It belongs to the SHMT family. Homodimer. The cofactor is pyridoxal 5'-phosphate.

Its subcellular location is the cytoplasm. It catalyses the reaction (6R)-5,10-methylene-5,6,7,8-tetrahydrofolate + glycine + H2O = (6S)-5,6,7,8-tetrahydrofolate + L-serine. Its pathway is one-carbon metabolism; tetrahydrofolate interconversion. It functions in the pathway amino-acid biosynthesis; glycine biosynthesis; glycine from L-serine: step 1/1. Its function is as follows. Catalyzes the reversible interconversion of serine and glycine with tetrahydrofolate (THF) serving as the one-carbon carrier. This reaction serves as the major source of one-carbon groups required for the biosynthesis of purines, thymidylate, methionine, and other important biomolecules. Also exhibits THF-independent aldolase activity toward beta-hydroxyamino acids, producing glycine and aldehydes, via a retro-aldol mechanism. In Prochlorococcus marinus (strain NATL2A), this protein is Serine hydroxymethyltransferase.